Consider the following 122-residue polypeptide: Proximal tubules-expressed gene protein (122 aa).

Residues 33–53 traverse the membrane as a helical segment; that stretch reads WLTGLIAMTVFLFLVLVVYVA.

It belongs to the PDZK1-interacting protein 1/SMIM24 family. Expressed in prospective pronephric mesoderm at the late gastrula stage. After neurulation, expressed in the intermediate mesoderm, eye placode and blood islands. Expression becomes restricted to the pronephric proximal tubule during embryogenesis, but is absent from the connecting tubules.

The protein localises to the membrane. Its function is as follows. Essential for pronephric tubule development, acting upstream of pax8 and lhx1/lim1 and downstream of retinoic acid signaling to induce pronephric mesoderm to form pronephric tubule-specific cells. The protein is Proximal tubules-expressed gene protein (pteg) of Xenopus laevis (African clawed frog).